The primary structure comprises 245 residues: Biosynthetic peptidoglycan transglycosylase (245 aa).

A helical membrane pass occupies residues 20 to 42; that stretch reads VYAGSVFAGAWLATQLFYLAQIA.

Belongs to the glycosyltransferase 51 family.

It is found in the cell inner membrane. It catalyses the reaction [GlcNAc-(1-&gt;4)-Mur2Ac(oyl-L-Ala-gamma-D-Glu-L-Lys-D-Ala-D-Ala)](n)-di-trans,octa-cis-undecaprenyl diphosphate + beta-D-GlcNAc-(1-&gt;4)-Mur2Ac(oyl-L-Ala-gamma-D-Glu-L-Lys-D-Ala-D-Ala)-di-trans,octa-cis-undecaprenyl diphosphate = [GlcNAc-(1-&gt;4)-Mur2Ac(oyl-L-Ala-gamma-D-Glu-L-Lys-D-Ala-D-Ala)](n+1)-di-trans,octa-cis-undecaprenyl diphosphate + di-trans,octa-cis-undecaprenyl diphosphate + H(+). Its pathway is cell wall biogenesis; peptidoglycan biosynthesis. Peptidoglycan polymerase that catalyzes glycan chain elongation from lipid-linked precursors. The protein is Biosynthetic peptidoglycan transglycosylase of Burkholderia cenocepacia (strain HI2424).